Here is an 815-residue protein sequence, read N- to C-terminus: Probable beta-glucosidase G (815 aa).

Residues 1 to 20 (MASIAHLVVSGLLAATAVNG) form the signal peptide. N-linked (GlcNAc...) asparagine glycosylation is found at asparagine 40, asparagine 58, asparagine 229, and asparagine 276. Aspartate 304 is an active-site residue. N-linked (GlcNAc...) asparagine glycans are attached at residues asparagine 343, asparagine 350, asparagine 402, asparagine 507, asparagine 563, asparagine 584, asparagine 623, asparagine 662, and asparagine 715.

Belongs to the glycosyl hydrolase 3 family.

The protein resides in the secreted. The enzyme catalyses Hydrolysis of terminal, non-reducing beta-D-glucosyl residues with release of beta-D-glucose.. It participates in glycan metabolism; cellulose degradation. Beta-glucosidases are one of a number of cellulolytic enzymes involved in the degradation of cellulosic biomass. Catalyzes the last step releasing glucose from the inhibitory cellobiose. The sequence is that of Probable beta-glucosidase G (bglG) from Aspergillus flavus (strain ATCC 200026 / FGSC A1120 / IAM 13836 / NRRL 3357 / JCM 12722 / SRRC 167).